The primary structure comprises 237 residues: Uridylate kinase (237 aa).

10-13 (KLSG) lines the ATP pocket. A UMP-binding site is contributed by G52. The ATP site is built by G53 and R57. Residues D72 and 133–140 (TGNPFFTT) contribute to the UMP site. 3 residues coordinate ATP: T160, Y166, and D169.

The protein belongs to the UMP kinase family. As to quaternary structure, homohexamer.

It localises to the cytoplasm. It carries out the reaction UMP + ATP = UDP + ADP. It functions in the pathway pyrimidine metabolism; CTP biosynthesis via de novo pathway; UDP from UMP (UMPK route): step 1/1. Inhibited by UTP. Catalyzes the reversible phosphorylation of UMP to UDP. This is Uridylate kinase from Thiobacillus denitrificans (strain ATCC 25259 / T1).